The sequence spans 264 residues: Tropinone reductase homolog At5g06060 (264 aa).

15–39 (LVTGGTRGIGRAVVEELAKFGAKVH) provides a ligand contact to NADP(+). S148 provides a ligand contact to substrate. The active-site Proton acceptor is the Y161.

The protein belongs to the short-chain dehydrogenases/reductases (SDR) family. SDR65C subfamily.

The polypeptide is Tropinone reductase homolog At5g06060 (Arabidopsis thaliana (Mouse-ear cress)).